The primary structure comprises 80 residues: U-scoloptoxin(15)-Er1a (80 aa).

The signal sequence occupies residues 1–22 (MQNKGVVLTLFLVVSMAIVISS).

It belongs to the scoloptoxin-15 family. In terms of processing, contains 2 disulfide bonds. In terms of tissue distribution, expressed by the venom gland.

It localises to the secreted. The sequence is that of U-scoloptoxin(15)-Er1a from Ethmostigmus rubripes (Giant centipede).